The primary structure comprises 227 residues: Large ribosomal subunit protein uL3 (227 aa).

It belongs to the universal ribosomal protein uL3 family. In terms of assembly, part of the 50S ribosomal subunit. Forms a cluster with proteins L14 and L19.

One of the primary rRNA binding proteins, it binds directly near the 3'-end of the 23S rRNA, where it nucleates assembly of the 50S subunit. The sequence is that of Large ribosomal subunit protein uL3 from Leuconostoc citreum (strain KM20).